The following is a 342-amino-acid chain: tRNA N6-adenosine threonylcarbamoyltransferase (342 aa).

Fe cation-binding residues include His-111 and His-115. Substrate-binding positions include 133–137, Asp-166, Gly-179, Asp-183, and Asn-273; that span reads AVSGG. Asp-301 serves as a coordination point for Fe cation.

The protein belongs to the KAE1 / TsaD family. Fe(2+) serves as cofactor.

The protein localises to the cytoplasm. The catalysed reaction is L-threonylcarbamoyladenylate + adenosine(37) in tRNA = N(6)-L-threonylcarbamoyladenosine(37) in tRNA + AMP + H(+). Its function is as follows. Required for the formation of a threonylcarbamoyl group on adenosine at position 37 (t(6)A37) in tRNAs that read codons beginning with adenine. Is involved in the transfer of the threonylcarbamoyl moiety of threonylcarbamoyl-AMP (TC-AMP) to the N6 group of A37, together with TsaE and TsaB. TsaD likely plays a direct catalytic role in this reaction. The sequence is that of tRNA N6-adenosine threonylcarbamoyltransferase from Syntrophotalea carbinolica (strain DSM 2380 / NBRC 103641 / GraBd1) (Pelobacter carbinolicus).